The sequence spans 503 residues: GMP synthase [glutamine-hydrolyzing] (503 aa).

One can recognise a Glutamine amidotransferase type-1 domain in the interval 1–178 (MREANVYSEI…LHRAAGIPAD (178 aa)). Cysteine 60 functions as the Nucleophile in the catalytic mechanism. Active-site residues include histidine 152 and glutamate 154. Positions 179 to 377 (WNSGNVIADQ…LGLPEVIVGR (199 aa)) constitute a GMPS ATP-PPase domain. 206–212 (SGGVDSA) contributes to the ATP binding site.

As to quaternary structure, homodimer.

It carries out the reaction XMP + L-glutamine + ATP + H2O = GMP + L-glutamate + AMP + diphosphate + 2 H(+). It participates in purine metabolism; GMP biosynthesis; GMP from XMP (L-Gln route): step 1/1. Its function is as follows. Catalyzes the synthesis of GMP from XMP. The polypeptide is GMP synthase [glutamine-hydrolyzing] (Leifsonia xyli subsp. xyli (strain CTCB07)).